Consider the following 3258-residue polypeptide: Protein unc-80 homolog (3258 aa).

Residues 152-173 are disordered; it reads VENQGSPGQPCQSSSNDEEENN. The span at 155-166 shows a compositional bias: low complexity; the sequence is QGSPGQPCQSSS. S257 bears the Phosphoserine mark. Disordered stretches follow at residues 291–316, 449–468, 522–560, 697–717, 732–784, 963–1019, 1034–1076, 1404–1447, and 1817–1836; these read RGNS…RASL, RKED…GKRR, RRGS…HGEN, KKSE…GAFQ, PAVS…TPVS, PGKK…EQMQ, KSQS…ISLR, EDSK…MSNA, and AVSA…HHVP. Over residues 295-307 the composition is skewed to polar residues; sequence FDGSLSSQTSQER. S525 is subject to Phosphoserine. The span at 698–712 shows a compositional bias: basic and acidic residues; sequence KSENKENETLEKRPS. Residues 732–767 are compositionally biased toward gly residues; the sequence is PAVSGAGDGGGEEGGGGDGGGGGGDGGGGGGGGGGP. Basic and acidic residues-rich tracts occupy residues 769–780 and 965–974; these read EKNDKNQEKDES and KKVEENEQES. Positions 1035 to 1052 are enriched in low complexity; it reads SQSAASDTSSQSEQDTSE. Positions 1066-1076 are enriched in basic residues; it reads ARSRSRRISLR. A compositionally biased stretch (basic and acidic residues) spans 1417–1429; the sequence is LKSDAGVEEKKEG. Transmembrane regions (helical) follow at residues 2268–2288, 2398–2418, 2785–2805, and 2831–2851; these read PFVL…DAAN, IAAT…VEVL, GLAE…LVCF, and LALW…FVLL. A compositionally biased stretch (polar residues) spans 2942–2964; sequence NTGTGTVWEQDSEPSQQASQDTL. A disordered region spans residues 2942-2982; it reads NTGTGTVWEQDSEPSQQASQDTLSRTDEEDEENDSISMPSV. A Phosphoserine modification is found at S3042. A disordered region spans residues 3051–3213; it reads NLLVQQPLGR…DDFTGLETSS (163 aa). Residues 3059-3068 show a composition bias toward basic residues; that stretch reads GRKRGLRQLR. Positions 3088 to 3100 are enriched in polar residues; the sequence is RLSTTRRSIQPKT. Positions 3117–3129 are enriched in low complexity; the sequence is PEPAAAPTDALPA. A compositionally biased stretch (acidic residues) spans 3175-3186; it reads PTEEGEKEEDTE.

It belongs to the unc-80 family. NALCN complex consists of NALCN and auxiliary subunits, UNC79, UNC80 and NACL1. These auxiliary subunits are essential for the NALCN complex function. Interacts (via N-terminus half) with NALCN; this interaction facilitates NALCN surface localization. Interacts with UNC79. UNC80 bridges NALCN to UNC79. In terms of processing, phosphorylated on tyrosine residues. Moderately expressed in fetal brain, spinal cord, skeletal muscle, thymus, spleen, fetal liver, small intestine, colon, kidney and uterus. Highly expressed in adrenal gland, prostate and testis, as well as in brain and cerebellum.

The protein localises to the cell membrane. Auxiliary subunit of the NALCN sodium channel complex, a voltage-gated ion channel responsible for the resting Na(+) permeability that controls neuronal excitability. Activated by neuropeptides substance P, neurotensin, and extracellular Ca(2+) that regulates neuronal excitability by controlling the sizes of NALCN-dependent sodium-leak current. UNC80 is essential for NALCN sensitivity to extracellular Ca(2+). This is Protein unc-80 homolog from Homo sapiens (Human).